An 89-amino-acid polypeptide reads, in one-letter code: Signal recognition particle 19 kDa protein (89 aa).

Belongs to the SRP19 family. As to quaternary structure, part of the signal recognition particle protein translocation system, which is composed of SRP and FtsY. Archaeal SRP consists of a 7S RNA molecule of 300 nucleotides and two protein subunits: SRP54 and SRP19.

It localises to the cytoplasm. Functionally, involved in targeting and insertion of nascent membrane proteins into the cytoplasmic membrane. Binds directly to 7S RNA and mediates binding of the 54 kDa subunit of the SRP. In Methanococcus maripaludis (strain DSM 14266 / JCM 13030 / NBRC 101832 / S2 / LL), this protein is Signal recognition particle 19 kDa protein.